Here is a 51-residue protein sequence, read N- to C-terminus: Large ribosomal subunit protein eL39z (51 aa).

Belongs to the eukaryotic ribosomal protein eL39 family.

The sequence is that of Large ribosomal subunit protein eL39z (RPL39A) from Oryza sativa subsp. japonica (Rice).